The primary structure comprises 78 residues: uncharacterized protein (78 aa).

2 helical membrane-spanning segments follow: residues 12 to 32 and 51 to 71; these read LVSV…ICVV and GVGA…VAVH.

It is found in the cell membrane. This is an uncharacterized protein from Treponema pallidum (strain Nichols).